Consider the following 249-residue polypeptide: 1-(5-phosphoribosyl)-5-[(5-phosphoribosylamino)methylideneamino] imidazole-4-carboxamide isomerase (249 aa).

Asp11 (proton acceptor) is an active-site residue. Asp133 (proton donor) is an active-site residue.

The protein belongs to the HisA/HisF family.

Its subcellular location is the cytoplasm. The catalysed reaction is 1-(5-phospho-beta-D-ribosyl)-5-[(5-phospho-beta-D-ribosylamino)methylideneamino]imidazole-4-carboxamide = 5-[(5-phospho-1-deoxy-D-ribulos-1-ylimino)methylamino]-1-(5-phospho-beta-D-ribosyl)imidazole-4-carboxamide. Its pathway is amino-acid biosynthesis; L-histidine biosynthesis; L-histidine from 5-phospho-alpha-D-ribose 1-diphosphate: step 4/9. This Actinobacillus succinogenes (strain ATCC 55618 / DSM 22257 / CCUG 43843 / 130Z) protein is 1-(5-phosphoribosyl)-5-[(5-phosphoribosylamino)methylideneamino] imidazole-4-carboxamide isomerase.